A 131-amino-acid polypeptide reads, in one-letter code: Modulator protein MzrA (131 aa).

The Cytoplasmic portion of the chain corresponds to 1 to 14; it reads MSIRWLFPKLTPRK. The helical transmembrane segment at 15–31 threads the bilayer; that stretch reads VARILILLALPIIALTQ. Residues 32-131 lie on the Periplasmic side of the membrane; sequence SQSLRHSQDD…KLTQKQSKLG (100 aa).

It belongs to the MzrA family. In terms of assembly, interacts with EnvZ.

Its subcellular location is the cell inner membrane. In terms of biological role, modulates the activity of the EnvZ/OmpR two-component regulatory system, probably by directly modulating EnvZ enzymatic activity and increasing stability of phosphorylated OmpR. This Pectobacterium carotovorum subsp. carotovorum (strain PC1) protein is Modulator protein MzrA.